We begin with the raw amino-acid sequence, 251 residues long: HTH-type transcriptional regulator IolR (251 aa).

The HTH deoR-type domain occupies 1-57 (MKLMRIQEMEEYILSHGTVSLDELCQVFNVSKNTVRRDINKLTEKGAIEKVYGGVTS). Residues 19 to 38 (VSLDELCQVFNVSKNTVRRD) constitute a DNA-binding region (H-T-H motif).

Iol operon repressor. The polypeptide is HTH-type transcriptional regulator IolR (iolR) (Bacillus subtilis (strain 168)).